A 495-amino-acid chain; its full sequence is MQKRRIITVNPSASIEMSQYENNEVPYSSVGADEVPSSPPKATDKIRKVSMLPLVFLIFYEVSGGPFGVEDSVNAAGPLLALLGFVIFPFIWSIPEALITAEMGTMYPENGGYVVWVSSALGPFWGFQQGWMKWLSGVIDNALYPVLFLDYLKSGVPALGSGLPRVASILVLTILLTYLNYRGLTIVGWVAVLMGVFSILPFAVMGLISIPQLEPSRWLVMDLGNVNWNLYLNTLFWNLNYWDSISTLAGEVENPNHTLPKALFYGVILVACSYIFPLLAGIGAIPLEREKWTDGYFSDVAKALGGAWLRWWVQAAAATSNMGMFIAEMSSDSFQLLGMAERGMLPEFFAKRSRYGTPLLGILFSASGVVLLSWLSFQEIVAAENLLYCVGMILEFIAFVRMRMKHPAASRPYKIPIGTTGSILMCIPPTILICAVVALSSLKVAAVSIVMMIIGFLIHPLLNHMDRKRWVKFSISSDLPDLQQQTREYEETLIR.

11 consecutive transmembrane segments (helical) span residues 49–69, 79–99, 112–132, 156–176, 186–206, 230–250, 267–287, 357–377, 380–400, 417–437, and 442–462; these read VSML…PFGV, LLAL…EALI, GYVV…QGWM, VPAL…TILL, IVGW…AVMG, LYLN…TLAG, VILV…AIPL, TPLL…WLSF, IVAA…IAFV, IGTT…CAVV, and LKVA…HPLL.

Belongs to the amino acid-polyamine-organocation (APC) superfamily. Polyamine:cation symporter (PHS) (TC 2.A.3.12) family.

It is found in the cell membrane. Its function is as follows. Probable cell membrane polyamine/proton symporter involved in the polyamine uptake in cells. This chain is Probable polyamine transporter At1g31830, found in Arabidopsis thaliana (Mouse-ear cress).